Consider the following 77-residue polypeptide: uncharacterized protein (77 aa).

This is an uncharacterized protein from Dictyostelium discoideum (Social amoeba).